A 386-amino-acid chain; its full sequence is 26S proteasome non-ATPase regulatory subunit 13 homolog A (386 aa).

An N-acetylalanine modification is found at Ala2. The 175-residue stretch at 173 to 347 (EFSDFYKSAL…GTIYVSWAQP (175 aa)) folds into the PCI domain.

This sequence belongs to the proteasome subunit S11 family. Component of the 19S regulatory particle (RP/PA700) lid subcomplex of the 26S proteasome. The 26S proteasome is composed of a core protease (CP), known as the 20S proteasome, capped at one or both ends by the 19S regulatory particle (RP/PA700). The RP/PA700 complex is composed of at least 17 different subunits in two subcomplexes, the base and the lid, which form the portions proximal and distal to the 20S proteolytic core, respectively. Ubiquitous with highest expression in flowers.

Acts as a regulatory subunit of the 26S proteasome which is involved in the ATP-dependent degradation of ubiquitinated proteins. This is 26S proteasome non-ATPase regulatory subunit 13 homolog A (RPN9A) from Arabidopsis thaliana (Mouse-ear cress).